A 154-amino-acid chain; its full sequence is Large ribosomal subunit protein uL13 (154 aa).

The segment at 132–154 (PHEAQQPEVLDVKSMNAKNTRSA) is disordered.

Belongs to the universal ribosomal protein uL13 family. In terms of assembly, part of the 50S ribosomal subunit.

This protein is one of the early assembly proteins of the 50S ribosomal subunit, although it is not seen to bind rRNA by itself. It is important during the early stages of 50S assembly. This is Large ribosomal subunit protein uL13 from Paracoccus denitrificans (strain Pd 1222).